Reading from the N-terminus, the 130-residue chain is Histidine triad nucleotide-binding protein 1 (130 aa).

The 109-residue stretch at 22-130 folds into the HIT domain; it reads LFGKIIRKEI…GGRQLQWPPG (109 aa). The Histidine triad motif motif lies at 114 to 118; that stretch reads HLHLH.

This chain is Histidine triad nucleotide-binding protein 1 (hint-1), found in Caenorhabditis elegans.